We begin with the raw amino-acid sequence, 86 residues long: Exodeoxyribonuclease 7 small subunit (86 aa).

A disordered region spans residues 1-26 (MQDELFETEKAPQKNAKNAKNAPKKS).

The protein belongs to the XseB family. Heterooligomer composed of large and small subunits.

Its subcellular location is the cytoplasm. It carries out the reaction Exonucleolytic cleavage in either 5'- to 3'- or 3'- to 5'-direction to yield nucleoside 5'-phosphates.. Bidirectionally degrades single-stranded DNA into large acid-insoluble oligonucleotides, which are then degraded further into small acid-soluble oligonucleotides. This Helicobacter pylori (strain J99 / ATCC 700824) (Campylobacter pylori J99) protein is Exodeoxyribonuclease 7 small subunit.